The chain runs to 172 residues: MSASIRDAGVADLPGILAIYNDAVGNTTAIWNETPVDLANRQAWFDTRARQGYPILVASDAAGEVLGYASYGDWRPFEGFRGTVEHSVYVRDDQRGKGLGVQLLQALIERARAQGLHVMVAAIESGNAASIGLHRRLGFEISGQMPQVGQKFGRWLDLTFMQLNLDPTRSAP.

An N-acetyltransferase domain is found at 3–166 (ASIRDAGVAD…DLTFMQLNLD (164 aa)). Substrate is bound by residues 75 to 77 (RPF) and 85 to 87 (EHS). Acetyl-CoA-binding positions include 88-90 (VYV), 96-101 (GKGLGV), and N127.

As to quaternary structure, homodimer.

The catalysed reaction is L-methionine sulfoximine + acetyl-CoA = N-acetyl-L-methionine sulfoximine + CoA + H(+). The enzyme catalyses L-methionine sulfone + acetyl-CoA = N-acetyl-L-methionine sulfone + CoA + H(+). Functionally, plays a role in the resistance against the toxic effects of L-methionine sulfoximine (MSX), a rare amino acid, which inhibits glutamine synthetase (GlnA). Catalyzes the acetylation of L-methionine sulfoximine (MSX). The chain is L-methionine sulfoximine/L-methionine sulfone acetyltransferase from Pseudomonas aeruginosa (strain ATCC 15692 / DSM 22644 / CIP 104116 / JCM 14847 / LMG 12228 / 1C / PRS 101 / PAO1).